Reading from the N-terminus, the 53-residue chain is uncharacterized protein (53 aa).

The helical transmembrane segment at phenylalanine 13 to phenylalanine 35 threads the bilayer.

It is found in the membrane. This is an uncharacterized protein from Saccharomyces cerevisiae (strain ATCC 204508 / S288c) (Baker's yeast).